The chain runs to 194 residues: Adenylate kinase (194 aa).

ATP is bound at residue 10–15; that stretch reads GAGKGT. An NMP region spans residues 30 to 59; the sequence is STGDMLRAAVAQQSEIGKRAKAVMDAGQLV. AMP is bound by residues threonine 31, arginine 36, 57-59, 85-88, and glutamine 92; these read QLV and GYPR. Positions 126–142 are LID; the sequence is SRVAETIAKGAQVRSDD. Residue arginine 127 coordinates ATP. AMP-binding residues include arginine 139 and arginine 150. Residue alanine 178 coordinates ATP.

It belongs to the adenylate kinase family. As to quaternary structure, monomer.

The protein localises to the cytoplasm. It catalyses the reaction AMP + ATP = 2 ADP. Its pathway is purine metabolism; AMP biosynthesis via salvage pathway; AMP from ADP: step 1/1. Its function is as follows. Catalyzes the reversible transfer of the terminal phosphate group between ATP and AMP. Plays an important role in cellular energy homeostasis and in adenine nucleotide metabolism. This chain is Adenylate kinase, found in Brucella melitensis biotype 1 (strain ATCC 23456 / CCUG 17765 / NCTC 10094 / 16M).